The following is a 556-amino-acid chain: Dihydroxy-acid dehydratase (556 aa).

Cysteine 47 is a [2Fe-2S] cluster binding site. Aspartate 79 is a Mg(2+) binding site. Cysteine 120 contacts [2Fe-2S] cluster. Mg(2+) contacts are provided by aspartate 121 and lysine 122. Lysine 122 carries the N6-carboxylysine modification. Position 192 (cysteine 192) interacts with [2Fe-2S] cluster. Glutamate 444 lines the Mg(2+) pocket. Residue serine 470 is the Proton acceptor of the active site.

It belongs to the IlvD/Edd family. In terms of assembly, homodimer. The cofactor is [2Fe-2S] cluster. Mg(2+) serves as cofactor.

It carries out the reaction (2R)-2,3-dihydroxy-3-methylbutanoate = 3-methyl-2-oxobutanoate + H2O. The enzyme catalyses (2R,3R)-2,3-dihydroxy-3-methylpentanoate = (S)-3-methyl-2-oxopentanoate + H2O. It participates in amino-acid biosynthesis; L-isoleucine biosynthesis; L-isoleucine from 2-oxobutanoate: step 3/4. Its pathway is amino-acid biosynthesis; L-valine biosynthesis; L-valine from pyruvate: step 3/4. In terms of biological role, functions in the biosynthesis of branched-chain amino acids. Catalyzes the dehydration of (2R,3R)-2,3-dihydroxy-3-methylpentanoate (2,3-dihydroxy-3-methylvalerate) into 2-oxo-3-methylpentanoate (2-oxo-3-methylvalerate) and of (2R)-2,3-dihydroxy-3-methylbutanoate (2,3-dihydroxyisovalerate) into 2-oxo-3-methylbutanoate (2-oxoisovalerate), the penultimate precursor to L-isoleucine and L-valine, respectively. In Prochlorococcus marinus (strain NATL2A), this protein is Dihydroxy-acid dehydratase.